Consider the following 370-residue polypeptide: MLKTEELQINIGPQHPSTHGVFRMLVTVDGETLVDLKPVFGYLHRNHEQLGEVNTYLQNMPFTDRLDYFNSMVNNHAYARAVETLAGVEVPERAQYIRVIMDELSRILNHATAMGFMLGDMGAWQTALLWGMREREKILDMFEYVSGARMMCNYCRFGGVVRDIDDWFITELKKLMQGLPHYFDDFEGLLLNSEILLARARNIGVLPKELALAYSVTGPVLRGSGVAYDIRKAEPYAVYDRFKFKVPVGTVGDVYDRFLVRIAEMRESYKILEQAIEQLPDATGGFINPKVKQQSLKAPAGEAYARVESPKGELGFYLVSDGSGSAYRYKVRAPSFINLSSLADMCKGYSIADVVVILGSIDIVMGEVDR.

This sequence belongs to the complex I 49 kDa subunit family. In terms of assembly, NDH-1 is composed of 14 different subunits. Subunits NuoB, C, D, E, F, and G constitute the peripheral sector of the complex.

It localises to the cell membrane. It carries out the reaction a quinone + NADH + 5 H(+)(in) = a quinol + NAD(+) + 4 H(+)(out). In terms of biological role, NDH-1 shuttles electrons from NADH, via FMN and iron-sulfur (Fe-S) centers, to quinones in the respiratory chain. The immediate electron acceptor for the enzyme in this species is believed to be ubiquinone. Couples the redox reaction to proton translocation (for every two electrons transferred, four hydrogen ions are translocated across the cytoplasmic membrane), and thus conserves the redox energy in a proton gradient. The sequence is that of NADH-quinone oxidoreductase subunit D 2 from Herpetosiphon aurantiacus (strain ATCC 23779 / DSM 785 / 114-95).